We begin with the raw amino-acid sequence, 382 residues long: uncharacterized protein (382 aa).

The signal sequence occupies residues 1–25; it reads MKKWMAAVFVMMLMLCFGGIENVKA. The active-site Nucleophile is Ser-186. Residues Asp-354 and His-357 contribute to the active site.

This sequence belongs to the 'GDSL' lipolytic enzyme family.

This is an uncharacterized protein from Bacillus subtilis (strain 168).